The chain runs to 101 residues: UPF0235 protein Cpha266_2081 (101 aa).

The protein belongs to the UPF0235 family.

The protein is UPF0235 protein Cpha266_2081 of Chlorobium phaeobacteroides (strain DSM 266 / SMG 266 / 2430).